The chain runs to 576 residues: Formate--tetrahydrofolate ligase (576 aa).

64-71 (TPLGEGKT) is an ATP binding site.

It belongs to the formate--tetrahydrofolate ligase family.

The catalysed reaction is (6S)-5,6,7,8-tetrahydrofolate + formate + ATP = (6R)-10-formyltetrahydrofolate + ADP + phosphate. It functions in the pathway one-carbon metabolism; tetrahydrofolate interconversion. The chain is Formate--tetrahydrofolate ligase from Aeromonas hydrophila subsp. hydrophila (strain ATCC 7966 / DSM 30187 / BCRC 13018 / CCUG 14551 / JCM 1027 / KCTC 2358 / NCIMB 9240 / NCTC 8049).